The primary structure comprises 460 residues: MEEPEEATQATQEAPLHVSQNIAKQVVNNENVFMKLVMTRMLDGKTEVIPLTTDVHNGFWRFGRHKSCEVVLNGPRVSNFHFEIYQGHRNDSDESENVVFLHDHSSNGTFLNFERLAKNSRTILSNGDEIRIGLGVPKDEISFLCQVPVKHSRDSQKNMIKSENSHYEIIRTLGSGTFAVVKLAVEVNSGKWYAIKIINKRKILLTSSEKRATEMFQREIDILKSLHHPGVVQCHEIFENDDELFIVMEYVEGGDLMDFLIANGSIDEQDCKPLLKQLLETLLHLHKQGVTHRDIKPENILITNDFHLKISDFGLAKVIHGTGTFLETFCGTMGYLAPEVLKSKNVNLDGGYDDKVDIWSLGCVLYVMLTASIPFASSSQAKCIELISKGAYPIEPLLENEISEEGIDLINRMLEINPEKRISESEALQHPWFYTVSTHEHRTPPSSSEHEATEQLNSSS.

One can recognise an FHA domain in the interval Trp60–Leu116. Positions Tyr167 to Phe433 constitute a Protein kinase domain. Residues Leu173–Val181 and Lys196 contribute to the ATP site. Asp294 functions as the Proton acceptor in the catalytic mechanism. A compositionally biased stretch (basic and acidic residues) spans Thr438–Thr453. A disordered region spans residues Thr438–Ser460. Thr443 is subject to Phosphothreonine.

The protein belongs to the protein kinase superfamily. CAMK Ser/Thr protein kinase family. CHEK2 subfamily. As to quaternary structure, interacts with rad26. In terms of processing, autophosphorylated.

It carries out the reaction L-seryl-[protein] + ATP = O-phospho-L-seryl-[protein] + ADP + H(+). It catalyses the reaction L-threonyl-[protein] + ATP = O-phospho-L-threonyl-[protein] + ADP + H(+). Its function is as follows. Has a role in the DNA replication-monitoring S/G2 checkpoint system. It is responsible for blocking mitosis in the S phase. It monitors DNA synthesis by interacting with DNA polymerase alpha and sends a signal to block the onset of mitosis while DNA synthesis is in progress. Phosphorylates rad60 and dna2. The polypeptide is Serine/threonine-protein kinase cds1 (cds1) (Schizosaccharomyces pombe (strain 972 / ATCC 24843) (Fission yeast)).